A 353-amino-acid polypeptide reads, in one-letter code: tRNA-specific 2-thiouridylase MnmA 2 (353 aa).

ATP is bound by residues 9–16 (AMSGGVDS) and Met-35. Cys-98 acts as the Nucleophile in catalysis. A disulfide bridge links Cys-98 with Cys-194. Residue Gly-122 coordinates ATP. An interaction with tRNA region spans residues 144 to 146 (KDQ). The active-site Cysteine persulfide intermediate is Cys-194. The segment at 300–301 (RY) is interaction with tRNA.

The protein belongs to the MnmA/TRMU family.

The protein localises to the cytoplasm. The catalysed reaction is S-sulfanyl-L-cysteinyl-[protein] + uridine(34) in tRNA + AH2 + ATP = 2-thiouridine(34) in tRNA + L-cysteinyl-[protein] + A + AMP + diphosphate + H(+). Catalyzes the 2-thiolation of uridine at the wobble position (U34) of tRNA, leading to the formation of s(2)U34. The sequence is that of tRNA-specific 2-thiouridylase MnmA 2 from Clostridium botulinum (strain ATCC 19397 / Type A).